The following is a 288-amino-acid chain: Nucleotide-binding protein NE1849 (288 aa).

8–15 (GLSGSGKS) provides a ligand contact to ATP. 57–60 (DMRS) serves as a coordination point for GTP.

The protein belongs to the RapZ-like family.

Functionally, displays ATPase and GTPase activities. The sequence is that of Nucleotide-binding protein NE1849 from Nitrosomonas europaea (strain ATCC 19718 / CIP 103999 / KCTC 2705 / NBRC 14298).